The sequence spans 261 residues: MYTDTGLAVRVIPCLDVDAGRVVKGVNFENLRDAGDPVELAAAYDAEGADELTFLDVTASSSGRATMLEVVRHTAEQVFIPLTVGGGVRTVADVDLLLRAGADKVSVNTAAIARPDLLADMATQFGSQCIVLSVDARKVPVGPAPTPSGWEVTTHGGRRGTGIDAVEWAARGADLGVGEILLNSMDADGTKAGFDLAMLRAVRAAVTVPVIASGGAGNVDHFAPAVAAGADAVLAASVFHFRELTIGQVKAAMAAEGITVR.

Residues D16 and D135 contribute to the active site.

Belongs to the HisA/HisF family. Heterodimer of HisH and HisF.

Its subcellular location is the cytoplasm. It carries out the reaction 5-[(5-phospho-1-deoxy-D-ribulos-1-ylimino)methylamino]-1-(5-phospho-beta-D-ribosyl)imidazole-4-carboxamide + L-glutamine = D-erythro-1-(imidazol-4-yl)glycerol 3-phosphate + 5-amino-1-(5-phospho-beta-D-ribosyl)imidazole-4-carboxamide + L-glutamate + H(+). It participates in amino-acid biosynthesis; L-histidine biosynthesis; L-histidine from 5-phospho-alpha-D-ribose 1-diphosphate: step 5/9. Its function is as follows. IGPS catalyzes the conversion of PRFAR and glutamine to IGP, AICAR and glutamate. The HisF subunit catalyzes the cyclization activity that produces IGP and AICAR from PRFAR using the ammonia provided by the HisH subunit. The chain is Imidazole glycerol phosphate synthase subunit HisF from Mycobacterium marinum (strain ATCC BAA-535 / M).